The sequence spans 313 residues: uncharacterized protein (313 aa).

The HTH deoR-type domain maps to 2–57; it reads KLERLLAMVVLLISKKQVQAAELAELFEVSVRTIYRDIETINRAGIPIVTSQGSGG. Residues 19–38 constitute a DNA-binding region (H-T-H motif); the sequence is VQAAELAELFEVSVRTIYRD. The 80-residue stretch at 131 to 210 folds into the WYL domain; sequence HTEDQKTLRE…KDLAILHQTF (80 aa).

The protein localises to the cytoplasm. This is an uncharacterized protein from Bacillus subtilis (strain 168).